The sequence spans 176 residues: Ribosome maturation factor RimM (176 aa).

The PRC barrel domain maps to 99-173 (KEGEFHLVDL…WLLIKPPPGL (75 aa)).

It belongs to the RimM family. As to quaternary structure, binds ribosomal protein uS19.

Its subcellular location is the cytoplasm. Its function is as follows. An accessory protein needed during the final step in the assembly of 30S ribosomal subunit, possibly for assembly of the head region. Essential for efficient processing of 16S rRNA. May be needed both before and after RbfA during the maturation of 16S rRNA. It has affinity for free ribosomal 30S subunits but not for 70S ribosomes. The sequence is that of Ribosome maturation factor RimM from Prochlorococcus marinus (strain MIT 9211).